A 489-amino-acid chain; its full sequence is Lysine--tRNA ligase (489 aa).

E399 and E406 together coordinate Mg(2+).

Belongs to the class-II aminoacyl-tRNA synthetase family. In terms of assembly, homodimer. It depends on Mg(2+) as a cofactor.

The protein localises to the cytoplasm. The enzyme catalyses tRNA(Lys) + L-lysine + ATP = L-lysyl-tRNA(Lys) + AMP + diphosphate. This Synechococcus sp. (strain CC9311) protein is Lysine--tRNA ligase.